We begin with the raw amino-acid sequence, 481 residues long: UDP-N-acetylmuramoyl-L-alanyl-D-glutamate--L-lysine ligase (481 aa).

Residue Ser42 participates in UDP-N-acetyl-alpha-D-muramoyl-L-alanyl-D-glutamate binding. 118-124 (GTKGKTT) contacts ATP. Residues 160–161 (TT), Ser187, and Arg195 contribute to the UDP-N-acetyl-alpha-D-muramoyl-L-alanyl-D-glutamate site. An N6-carboxylysine modification is found at Lys229. The short motif at 404–407 (DDPN) is the L-lysine recognition motif element.

It belongs to the MurCDEF family. MurE subfamily. Post-translationally, carboxylation is probably crucial for Mg(2+) binding and, consequently, for the gamma-phosphate positioning of ATP.

It localises to the cytoplasm. The enzyme catalyses UDP-N-acetyl-alpha-D-muramoyl-L-alanyl-D-glutamate + L-lysine + ATP = UDP-N-acetyl-alpha-D-muramoyl-L-alanyl-gamma-D-glutamyl-L-lysine + ADP + phosphate + H(+). It functions in the pathway cell wall biogenesis; peptidoglycan biosynthesis. Its function is as follows. Catalyzes the addition of L-lysine to the nucleotide precursor UDP-N-acetylmuramoyl-L-alanyl-D-glutamate (UMAG) in the biosynthesis of bacterial cell-wall peptidoglycan. This Streptococcus suis (strain 98HAH33) protein is UDP-N-acetylmuramoyl-L-alanyl-D-glutamate--L-lysine ligase.